The following is a 1377-amino-acid chain: DNA-directed RNA polymerase subunit beta (1377 aa).

This sequence belongs to the RNA polymerase beta chain family. The RNAP catalytic core consists of 2 alpha, 1 beta, 1 beta' and 1 omega subunit. When a sigma factor is associated with the core the holoenzyme is formed, which can initiate transcription.

It catalyses the reaction RNA(n) + a ribonucleoside 5'-triphosphate = RNA(n+1) + diphosphate. DNA-dependent RNA polymerase catalyzes the transcription of DNA into RNA using the four ribonucleoside triphosphates as substrates. This Brucella canis (strain ATCC 23365 / NCTC 10854 / RM-666) protein is DNA-directed RNA polymerase subunit beta.